The sequence spans 59 residues: UPF0391 membrane protein Geob_0344 (59 aa).

2 helical membrane passes run 4-24 (WAAIFFIIAIVAAVFGFTGIA) and 33-53 (FLFILFLVVALIMLILGITAG).

It belongs to the UPF0391 family.

Its subcellular location is the cell membrane. The protein is UPF0391 membrane protein Geob_0344 of Geotalea daltonii (strain DSM 22248 / JCM 15807 / FRC-32) (Geobacter daltonii).